The following is a 405-amino-acid chain: Argininosuccinate synthase (405 aa).

Residue A11 to S19 participates in ATP binding. Residue Y90 coordinates L-citrulline. G119 serves as a coordination point for ATP. L-aspartate is bound by residues T121, N125, and D126. An L-citrulline-binding site is contributed by N125. Residues R129, S178, S187, E263, and Y275 each coordinate L-citrulline.

The protein belongs to the argininosuccinate synthase family. Type 1 subfamily. Homotetramer.

It localises to the cytoplasm. It carries out the reaction L-citrulline + L-aspartate + ATP = 2-(N(omega)-L-arginino)succinate + AMP + diphosphate + H(+). It participates in amino-acid biosynthesis; L-arginine biosynthesis; L-arginine from L-ornithine and carbamoyl phosphate: step 2/3. This chain is Argininosuccinate synthase, found in Legionella pneumophila subsp. pneumophila (strain Philadelphia 1 / ATCC 33152 / DSM 7513).